The sequence spans 133 residues: Antifungal protein ginkbilobin-like protein 2 (133 aa).

The first 24 residues, 1–24 (MSMGSFGFALAVMVLAVLVASAAG), serve as a signal peptide directing secretion. The region spanning 28 to 133 (TNLVSSACNG…CFIRYEQYSI (106 aa)) is the Gnk2-homologous domain. Residue N36 coordinates alpha-D-mannopyranose. Disulfide bonds link C87–C96 and C99–C124. 2 residues coordinate alpha-D-mannopyranose: R118 and E129.

Functionally, exerts antifungal activity through its carbohydrate-binding specificity. The protein is Antifungal protein ginkbilobin-like protein 2 of Picea glauca (White spruce).